The following is a 504-amino-acid chain: Syntaphilin (504 aa).

The segment at 1-74 (MAMSLQGSRR…HGIKPPTPEQ (74 aa)) is disordered. Low complexity-rich tracts occupy residues 7-26 (GSRR…VSVR) and 33-49 (SLSS…SDSS). A coiled-coil region spans residues 79–161 (LQQKEVCIRH…VKNNLIDKDK (83 aa)). The interval 191-244 (VAKEEGTGESAGGSPARSLTRSSTYTKLSDPAVCGDRQAGDPSNTPAEDRADSG) is disordered. 2 positions are modified to phosphoserine: Ser200 and Ser204. A compositionally biased stretch (polar residues) spans 207-217 (RSLTRSSTYTK). Position 214 is a phosphothreonine (Thr214). Ser219 carries the post-translational modification Phosphoserine. Thr235 carries the phosphothreonine modification. The chain crosses the membrane as a helical span at residues 437-456 (YIVDLLAVVVPAVPTVAWLC).

Binds to STX1A. Interacts with DNM1; this interaction inhibits the binding of DNM1 to AMPH and DNM1-receptor-mediated endocytosis.

The protein localises to the membrane. It is found in the synapse. The protein resides in the synaptosome. Functionally, inhibits SNARE complex formation by absorbing free STX1A. The chain is Syntaphilin from Rattus norvegicus (Rat).